A 347-amino-acid chain; its full sequence is Protein POOR HOMOLOGOUS SYNAPSIS 1 (347 aa).

It is found in the cytoplasm. In terms of biological role, required for accurate chromosome segregation in meiosis. Required for pairing to occur between homologous chromosomes. Acts in early recombination steps and ensures pairing fidelity and proper repair of meiotic DNA double-strand-breaks. Regulates recombination and pairing of homologous chromosomes during meiotic prophase by controlling transport of RAD50 from cytoplasm to the nucleus. May affect pairing of the gene-rich fraction of the genome rather than preventing pairing between repetitive DNA elements. This chain is Protein POOR HOMOLOGOUS SYNAPSIS 1, found in Zea mays (Maize).